Reading from the N-terminus, the 384-residue chain is Spermidine/putrescine import ATP-binding protein PotA (384 aa).

The 233-residue stretch at 6-238 (IAFKNVSKVF…PINHFVATFI (233 aa)) folds into the ABC transporter domain. 40–47 (GASGSGKS) provides a ligand contact to ATP.

It belongs to the ABC transporter superfamily. Spermidine/putrescine importer (TC 3.A.1.11.1) family. In terms of assembly, the complex is composed of two ATP-binding proteins (PotA), two transmembrane proteins (PotB and PotC) and a solute-binding protein (PotD).

It localises to the cell membrane. The catalysed reaction is ATP + H2O + polyamine-[polyamine-binding protein]Side 1 = ADP + phosphate + polyamineSide 2 + [polyamine-binding protein]Side 1.. In terms of biological role, part of the ABC transporter complex PotABCD involved in spermidine/putrescine import. Responsible for energy coupling to the transport system. In Streptococcus agalactiae serotype Ia (strain ATCC 27591 / A909 / CDC SS700), this protein is Spermidine/putrescine import ATP-binding protein PotA.